Reading from the N-terminus, the 395-residue chain is Type III polyketide synthase A (395 aa).

63 to 70 contributes to the CoA binding site; the sequence is KLEHLCKT. Residue Cys172 is the Nucleophile of the active site. 224–225 provides a ligand contact to substrate; that stretch reads GD. Residues Leu274, 314 to 317, and Ala317 contribute to the CoA site; that span reads GGPA.

Belongs to the thiolase-like superfamily. Chalcone/stilbene synthases family. In terms of assembly, homodimer. Interacts with 4CLL1/ACOS5 and TKPR1. In terms of tissue distribution, expressed in flowers and flower buds (at protein level), and, at very low levels, in roots, seedlings, leaves and stems. Mostly confined to anther tapetal cells.

Its subcellular location is the endoplasmic reticulum. The protein operates within secondary metabolite biosynthesis; flavonoid biosynthesis. Plant type III polyketide synthases (PKSs) that catalyzes the condensation of malonyl-CoA units with various CoA ester starter molecules to generate a diverse array of natural products including long-chain alkyl alpha-pyrones. Accepts up to C(20) chain-length fatty acyl CoAs as starter substrates, and carries out sequential condensations with malonyl-CoA to produce triketide and tetraketide alpha-pyrones, potential sporopollenin precursors. Favorite substrates for are midchain- and v-hydroxylated fatty acyl-CoAs (e.g. 12-hydroxyoctadecanoyl-CoA and 16-hydroxyhexadecanoyl-CoA). Required for pollen development and sporopollenin biosynthesis, the major constituent of exine in the outer pollen wall. In vitro, can use 4-coumaroyl-coenzyme A as substrate to produce bis-noryangonin and fatty acyl-coenzyme A as substrate to produce medium-chain alkyl pyrones. May play a role in both the synthesis of pollen fatty acids and phenolics found in exine. The protein is Type III polyketide synthase A of Arabidopsis thaliana (Mouse-ear cress).